A 397-amino-acid chain; its full sequence is CCA-adding enzyme (397 aa).

Gly-26 and Arg-29 together coordinate ATP. Residues Gly-26 and Arg-29 each contribute to the CTP site. Mg(2+) is bound by residues Asp-39 and Asp-41. The ATP site is built by Arg-110, Asp-153, Arg-156, Arg-159, and Arg-162. CTP-binding residues include Arg-110, Asp-153, Arg-156, Arg-159, and Arg-162.

Belongs to the tRNA nucleotidyltransferase/poly(A) polymerase family. Bacterial CCA-adding enzyme type 3 subfamily. Homodimer. It depends on Mg(2+) as a cofactor.

It carries out the reaction a tRNA precursor + 2 CTP + ATP = a tRNA with a 3' CCA end + 3 diphosphate. The catalysed reaction is a tRNA with a 3' CCA end + 2 CTP + ATP = a tRNA with a 3' CCACCA end + 3 diphosphate. In terms of biological role, catalyzes the addition and repair of the essential 3'-terminal CCA sequence in tRNAs without using a nucleic acid template. Adds these three nucleotides in the order of C, C, and A to the tRNA nucleotide-73, using CTP and ATP as substrates and producing inorganic pyrophosphate. tRNA 3'-terminal CCA addition is required both for tRNA processing and repair. Also involved in tRNA surveillance by mediating tandem CCA addition to generate a CCACCA at the 3' terminus of unstable tRNAs. While stable tRNAs receive only 3'-terminal CCA, unstable tRNAs are marked with CCACCA and rapidly degraded. This is CCA-adding enzyme from Bacillus cereus (strain ZK / E33L).